The sequence spans 957 residues: Leucine--tRNA ligase (957 aa).

The short motif at 66-77 is the 'HIGH' region element; sequence PYPSGAGLHVGH. A 'KMSKS' region motif is present at residues 728-732; it reads KMGKS. K731 is an ATP binding site.

Belongs to the class-I aminoacyl-tRNA synthetase family.

Its subcellular location is the cytoplasm. It carries out the reaction tRNA(Leu) + L-leucine + ATP = L-leucyl-tRNA(Leu) + AMP + diphosphate. This Streptomyces griseus subsp. griseus (strain JCM 4626 / CBS 651.72 / NBRC 13350 / KCC S-0626 / ISP 5235) protein is Leucine--tRNA ligase.